Consider the following 142-residue polypeptide: MVIETWKKSGIATKFPTYRNSAPVTVHSWQKGKRQDVEAEGLWRIKDGIYDFTEFIDKHPGGTFWIRETKGTDITEAFEAHHLTTAPEKMIAKYKVRDAYQRIYTLTLHEDGFYKTLKERVREKLKTIDKRPKRKSDVSDDL.

Residues 16–100 (PTYRNSAPVT…IAKYKVRDAY (85 aa)) enclose the Cytochrome b5 heme-binding domain. Heme-binding residues include His59 and His82.

The protein belongs to the cytochrome b5 family.

Its function is as follows. May play a role in muscle cell metabolism. The chain is Cytochrome b5-related protein (Cyt-b5-r) from Drosophila virilis (Fruit fly).